Consider the following 388-residue polypeptide: Mannitol-1-phosphate 5-dehydrogenase (388 aa).

An NAD(+)-binding site is contributed by 4–15; that stretch reads AVHFGAGNIGRG.

Belongs to the mannitol dehydrogenase family.

The enzyme catalyses D-mannitol 1-phosphate + NAD(+) = beta-D-fructose 6-phosphate + NADH + H(+). The chain is Mannitol-1-phosphate 5-dehydrogenase from Lactococcus lactis subsp. cremoris (strain SK11).